Reading from the N-terminus, the 447-residue chain is NADH-ubiquinone oxidoreductase chain 4 (447 aa).

13 consecutive transmembrane segments (helical) span residues 28–48 (IFLA…FCDI), 56–76 (MISY…LMAS), 85–105 (YVNL…FTFS), 110–130 (FMFY…ILGW), 141–161 (IYLL…IFYI), 183–203 (FLYL…LVHL), 213–233 (PVSG…YGLL), 246–266 (FNYI…LICL), 273–293 (ALIA…LMTM), 301–321 (SYTL…LANI), 343–365 (SLSL…LNLL), 380–400 (LTMI…LYLF), and 409–431 (YSGV…LHWL).

The protein belongs to the complex I subunit 4 family.

It is found in the mitochondrion membrane. It catalyses the reaction a ubiquinone + NADH + 5 H(+)(in) = a ubiquinol + NAD(+) + 4 H(+)(out). Core subunit of the mitochondrial membrane respiratory chain NADH dehydrogenase (Complex I) that is believed to belong to the minimal assembly required for catalysis. Complex I functions in the transfer of electrons from NADH to the respiratory chain. The immediate electron acceptor for the enzyme is believed to be ubiquinone. The sequence is that of NADH-ubiquinone oxidoreductase chain 4 from Aedes aegypti (Yellowfever mosquito).